Here is a 341-residue protein sequence, read N- to C-terminus: Mitochondrial transcription factor 1 (341 aa).

Leu-23, Glu-77, Asp-101, and Asn-137 together coordinate S-adenosyl-L-methionine.

The protein belongs to the class I-like SAM-binding methyltransferase superfamily. rRNA adenine N(6)-methyltransferase family.

It localises to the mitochondrion. Functionally, mitochondrial transcription factor that confers selective promoter recognition on the core subunit of the yeast mitochondrial RNA polymerase. Interacts with DNA in a non-specific manner. The chain is Mitochondrial transcription factor 1 (MTF1) from Saccharomyces paradoxus (Yeast).